The primary structure comprises 516 residues: Delta(24)-sterol reductase (516 aa).

Residues 1–22 (MEPAVSLAVCALLFLLWVRVKG) form the signal peptide. Over 23-31 (LEFVLIHQR) the chain is Lumenal. The helical transmembrane segment at 32–52 (WVFVCLFLLPLSLIFDIYYYV) threads the bilayer. Over 53 to 516 (RAWVVFKLSS…YDKICKAARH (464 aa)) the chain is Cytoplasmic. The region spanning 58-234 (FKLSSAPRLH…VAAEIRIIPA (177 aa)) is the FAD-binding PCMH-type domain. Position 163–175 (163–175 (TVGGLIMGTGIES)) interacts with FAD.

Belongs to the FAD-binding oxidoreductase/transferase type 4 family. The cofactor is FAD.

It is found in the endoplasmic reticulum membrane. The protein localises to the golgi apparatus membrane. It catalyses the reaction 5alpha-cholest-8-en-3beta-ol + NADP(+) = zymosterol + NADPH + H(+). The enzyme catalyses cholesterol + NADP(+) = desmosterol + NADPH + H(+). The catalysed reaction is lanosterol + NADPH + H(+) = 24,25-dihydrolanosterol + NADP(+). Its pathway is steroid biosynthesis; cholesterol biosynthesis. Catalyzes the reduction of the delta-24 double bond of sterol intermediates during cholesterol biosynthesis. In addition to its cholesterol-synthesizing activity, can protect cells from oxidative stress by reducing caspase 3 activity during apoptosis induced by oxidative stress. Also protects against amyloid-beta peptide-induced apoptosis. The sequence is that of Delta(24)-sterol reductase (Dhcr24) from Mus musculus (Mouse).